Consider the following 448-residue polypeptide: FAD-linked oxidoreductase nodO (448 aa).

Residues 35 to 206 enclose the FAD-binding PCMH-type domain; that stretch reads PEHFPLAIVK…IRFFLKTCPL (172 aa).

It belongs to the oxygen-dependent FAD-linked oxidoreductase family. The cofactor is FAD.

It functions in the pathway secondary metabolite biosynthesis. FAD-linked oxidoreductase; part of the gene cluster that mediates the biosynthesis of the indole diterpenes nodulisporic acids (NA). Nodulisporic acid A (NAA) and its chemically modified derivatives are of particular significance because of their highly potent insecticidal activity against blood-feeding arthropods and lack of observable adverse effects on mammals, in particular the tremogenicity associated with the paspaline-derived IDTs is not observed. The geranylgeranyl diphosphate (GGPP) synthase ggs1, localized outside of the cluster, is proposed to catalyze the first step in nodulisporic acid biosynthesis via conversion of farnesyl pyrophosphate and isopentyl pyrophosphate into geranylgeranyl pyrophosphate (GGPP). Condensation of indole-3-glycerol phosphate with GGPP by the prenyl transferase nodC then forms 3-geranylgeranylindole (3-GGI). Epoxidation by the FAD-dependent monooxygenase nodM leads to a single-epoxidized-GGI that is substrate of the terpene cyclase nodB for cyclization to yield emindole SB. The terminal methyl carbon, C28, of emindole SB is then oxidized by the cytochrome P450 monooxygenase nodW to produce nodulisporic acid F (NAF), the pentacyclic core of NAA. NAF is converted to nodulisporic acid E (NAE) via prenylation. This step is probably performed by one of the indole diterpene prenyltransferases nodD1 or nodD2. Several oxidation steps performed by the FAD-linked oxidoreductase nodO and one of the cytochrome P450 monooxygenase nodR, nodX or nodZ further convert NAE to nodulisporic acid D (NAD). NAD is substrate of cytochrome P450 monooxygenase nodJ to produce the precursor of nodulisporic acid C (NAC), converted to NAC by one of the indole diterpene prenyltransferases nodD1 or nodD2. The FAD-dependent monooxygenase nodY2 then oxidizes NAC to nodulisporic acid B (NAB). Finally NAB is converted to NAA by one of the cytochrome P450 monooxygenases nodR, nodX or nodZ. The polypeptide is FAD-linked oxidoreductase nodO (Hypoxylon pulicicidum).